The sequence spans 386 residues: Bifunctional enzyme IspD/IspF (386 aa).

Residues 1–230 form a 2-C-methyl-D-erythritol 4-phosphate cytidylyltransferase region; it reads MNSVPSLPGQ…LEEQSMSVIP (230 aa). The 2-C-methyl-D-erythritol 2,4-cyclodiphosphate synthase stretch occupies residues 231–386; that stretch reads RTGMGFDVHR…AQAVATVVSG (156 aa). Residues Asp237 and His239 each contribute to the a divalent metal cation site. 4-CDP-2-C-methyl-D-erythritol 2-phosphate-binding positions include 237-239 and 263-264; these read DVH and HS. An a divalent metal cation-binding site is contributed by His271. 4-CDP-2-C-methyl-D-erythritol 2-phosphate-binding positions include 285–287, 361–364, and Arg371; these read DIG and TTTE.

The protein in the N-terminal section; belongs to the IspD/TarI cytidylyltransferase family. IspD subfamily. This sequence in the C-terminal section; belongs to the IspF family. It depends on a divalent metal cation as a cofactor.

It carries out the reaction 2-C-methyl-D-erythritol 4-phosphate + CTP + H(+) = 4-CDP-2-C-methyl-D-erythritol + diphosphate. The catalysed reaction is 4-CDP-2-C-methyl-D-erythritol 2-phosphate = 2-C-methyl-D-erythritol 2,4-cyclic diphosphate + CMP. It functions in the pathway isoprenoid biosynthesis; isopentenyl diphosphate biosynthesis via DXP pathway; isopentenyl diphosphate from 1-deoxy-D-xylulose 5-phosphate: step 2/6. It participates in isoprenoid biosynthesis; isopentenyl diphosphate biosynthesis via DXP pathway; isopentenyl diphosphate from 1-deoxy-D-xylulose 5-phosphate: step 4/6. Its function is as follows. Bifunctional enzyme that catalyzes the formation of 4-diphosphocytidyl-2-C-methyl-D-erythritol from CTP and 2-C-methyl-D-erythritol 4-phosphate (MEP) (IspD), and catalyzes the conversion of 4-diphosphocytidyl-2-C-methyl-D-erythritol 2-phosphate (CDP-ME2P) to 2-C-methyl-D-erythritol 2,4-cyclodiphosphate (ME-CPP) with a corresponding release of cytidine 5-monophosphate (CMP) (IspF). This Novosphingobium aromaticivorans (strain ATCC 700278 / DSM 12444 / CCUG 56034 / CIP 105152 / NBRC 16084 / F199) protein is Bifunctional enzyme IspD/IspF.